We begin with the raw amino-acid sequence, 87 residues long: UPF0512 protein B (87 aa).

This sequence belongs to the UPF0512 family.

This Dictyostelium discoideum (Social amoeba) protein is UPF0512 protein B.